We begin with the raw amino-acid sequence, 44 residues long: MSKLVQAISDAVQAQQNQDWAKLGTSIVGIVENGVGILGKLFGF.

Position 1 is an N-formylmethionine (Met-1).

This sequence belongs to the staphylococcal hemolytic protein family.

It is found in the secreted. Its function is as follows. Has hemolytic activity and also inhibits the growth of gonococci. This Staphylococcus haemolyticus protein is Antibacterial protein 3.